The primary structure comprises 293 residues: Undecaprenyl-diphosphatase (293 aa).

8 helical membrane-spanning segments follow: residues 3–23 (IALA…EFLP), 43–63 (KGKI…CWEF), 85–105 (VNVI…GKWI), 109–129 (LFNP…ILLA), 178–198 (FALV…MLFG), 203–223 (VATE…TVYE), 238–258 (IFAV…RWLL), and 269–289 (FAWY…TGVI).

The protein belongs to the UppP family.

It is found in the cell inner membrane. It catalyses the reaction di-trans,octa-cis-undecaprenyl diphosphate + H2O = di-trans,octa-cis-undecaprenyl phosphate + phosphate + H(+). Its function is as follows. Catalyzes the dephosphorylation of undecaprenyl diphosphate (UPP). Confers resistance to bacitracin. The polypeptide is Undecaprenyl-diphosphatase (Cupriavidus metallidurans (strain ATCC 43123 / DSM 2839 / NBRC 102507 / CH34) (Ralstonia metallidurans)).